A 132-amino-acid polypeptide reads, in one-letter code: Small ribosomal subunit protein uS11 (132 aa).

This sequence belongs to the universal ribosomal protein uS11 family. Part of the 30S ribosomal subunit. Interacts with proteins S7 and S18. Binds to IF-3.

Its function is as follows. Located on the platform of the 30S subunit, it bridges several disparate RNA helices of the 16S rRNA. Forms part of the Shine-Dalgarno cleft in the 70S ribosome. This is Small ribosomal subunit protein uS11 from Clostridium botulinum (strain 657 / Type Ba4).